We begin with the raw amino-acid sequence, 329 residues long: Phospholipid scramblase 4 (329 aa).

A disordered region spans residues 1–51; sequence MSGVVPTAPEQPAGEMENQTKPPDPRPDAPPEYNSHFLPGPPGTAVPPPTG. Residues 1–98 are proline-rich domain (PRD); the sequence is MSGVVPTAPE…PMPNQSVPIT (98 aa). Residues 1–303 lie on the Cytoplasmic side of the membrane; sequence MSGVVPTAPE…IHFPLDLDVK (303 aa). The short motif at 18-25 is the SH3-binding 1 element; sequence NQTKPPDP. The short motif at 30–33 is the PPxY motif element; sequence PPEY. Pro residues predominate over residues 39 to 51; sequence PGPPGTAVPPPTG. Positions 41–49 match the SH3-binding 2 motif; sequence PPGTAVPPP. Y83 and Y88 each carry phosphotyrosine; by ABL. Residues 98–106 carry the SH3-binding 3 motif; the sequence is TWMPGPTPM. Residues C197, C198, C199, C201, and C202 are each lipidated (S-palmitoyl cysteine). The Nuclear localization signal motif lies at 271 to 283; it reads NIGSIIRKWNGLL. A helical transmembrane segment spans residues 304–320; it reads MKAMIFGACFLIDFMYF. Over 321-329 the chain is Extracellular; sequence ERSPPQRSR.

The protein belongs to the phospholipid scramblase family. Interacts with PDCD6. Interacts with KPNA2; this interaction mediates the nucleus import of PLSCR4. It depends on Ca(2+) as a cofactor. Mg(2+) serves as cofactor. The cofactor is Zn(2+). Expressed in heart, brain, placenta, lung, liver, kidney, pancreas, spleen, thymus, prostate, testis, uterus, small intestine and colon. Not detected in peripheral blood lymphocytes.

It localises to the cell membrane. The protein resides in the nucleus. The catalysed reaction is a 1,2-diacyl-sn-glycero-3-phosphocholine(in) = a 1,2-diacyl-sn-glycero-3-phosphocholine(out). It carries out the reaction a 1,2-diacyl-sn-glycero-3-phospho-L-serine(in) = a 1,2-diacyl-sn-glycero-3-phospho-L-serine(out). Functionally, catalyzes metal ion-induced ATP-independent rapid bidirectional and non-specific movement of phospholipids (lipid scrambling or lipid flip-flop) between the inner and outer leaflet of the plasma membrane and participates in the redistribution of phospholipids between membrane leaflets. Metal ions bind to the calcium-binding site and induce conformation change in the protein. Has a greater affi nity for Ca(2+) than Mg(2+) and Zn(2+). The sequence is that of Phospholipid scramblase 4 from Homo sapiens (Human).